The sequence spans 572 residues: MKAFSSYDEKPPAPPIRFSSSATRENQVVGLKPLPKEPEATKKKKTMPNPFMKKNKDKKEASEKPVISRPSNFEHTIHVGYDPKTGEFTGMPEAWARLLTDSQISKQEQQQNPQAVLDALKYYTQGESSGQKWLQYDMMFIDDAPSRTPSYGLKPQPYSTSSLPYHGNKIQDPRKMNPMTTSTSSAGYNSKQGVPPTTFSVNENRSSMPPSYAPPPVPHGETPADIVPPAIPDRPARTLSIYTKPKEEEEKIPDLSKGQFGVQARGQKAKKKMTDAEVLTKLRTIVSIGNPDRKYRKVDKIGSGASGSVYTAIEISTEAEVAIKQMNLKDQPKKELIINEILVMRENKHANIVNYLDSYLVCDELWVVMEYLAGGSLTDVVTECQMEDGIIAAVCREVLQALEFLHSRHVIHRDIKSDNILLGMDGSVKLTDFGFCAQLSPEQRKRTTMVGTPYWMAPEVVTRKQYGPKVDVWSLGIMAIEMVEGEPPYLNENPLRAIYLIATNGKPDFPGRDSMTLLFKDFVDSALEVQVENRWSASQLLTHPFLRCAKPLASLYYLIVAAKKSIAEASNS.

Disordered regions lie at residues 1–71 (MKAF…SRPS) and 156–195 (QPYSTSSLPYHGNKIQDPRKMNPMTTSTSSAGYNSKQGVP). The CRIB domain maps to 67–80 (ISRPSNFEHTIHVG). The interval 81–294 (YDPKTGEFTG…IVSIGNPDRK (214 aa)) is linker. Positions 178 to 195 (PMTTSTSSAGYNSKQGVP) are enriched in polar residues. Residues 295 to 546 (YRKVDKIGSG…ASQLLTHPFL (252 aa)) enclose the Protein kinase domain. Residues 301-309 (IGSGASGSV) and K324 contribute to the ATP site. Residue D414 is the Proton acceptor of the active site.

This sequence belongs to the protein kinase superfamily. STE Ser/Thr protein kinase family. STE20 subfamily. As to quaternary structure, interacts with cdc-42 (GTP-bound form) and cedd-10 (GTP-bound form). Mg(2+) is required as a cofactor. It depends on Mn(2+) as a cofactor. Specifically colocalized with cdc-42 and ced-10 at all hypodermal cell boundaries during embryo elongation throughout the second phase of embryogenesis. Expressed mainly in pharyngeal muscles, the CAN neurons, motor neurons in the ventral nerve cord, several cells in the tail region (including the B and Y cells from L1 to adult, the hypodermal blast cell T in the L1 and some of its progeny in later stages), and the distal tip cells.

The protein resides in the cell membrane. It is found in the cytoplasm. It localises to the cell projection. Its subcellular location is the axon. The protein localises to the perikaryon. The enzyme catalyses L-seryl-[protein] + ATP = O-phospho-L-seryl-[protein] + ADP + H(+). The catalysed reaction is L-threonyl-[protein] + ATP = O-phospho-L-threonyl-[protein] + ADP + H(+). Functionally, required for hypodermal cell fusion, together with cdc-42 and ced-10, leading to embryonic body elongation, which involves dramatic cytoskeletal reorganization. Plays a redundant role with max-2 in dorsal axonal guidance in ventral cord commissural motoneurons and in P neuroblast migration. Acts probably downstream of Rho GTPases mig-2 and ced-10 to regulate these 2 processes. Involved in orientating axonal growth of HSN neurons. During gonad morphogenesis and probably in association with pix-1 and git-1, involved in the migration of distal tip cell (DTC) and in maintaining their sharp tapering morphology. In addition, plays a redundant role with max-2 in DTC-mediated guidance of gonad elongation. May phosphorylate mlc-4. The polypeptide is Serine/threonine-protein kinase pak-1 (pak-1) (Caenorhabditis elegans).